The chain runs to 392 residues: Major outer membrane porin (392 aa).

A signal peptide spans 1–22 (MKKLLKSALLFAAAGSALSLQA).

This sequence belongs to the chlamydial porin (CP) (TC 1.B.2) family. In terms of assembly, part of a disulfide cross-linked outer membrane complex (COMC) composed of the major outer membrane porin (MOMP), the small cysteine-rich protein (OmcA) and the large cysteine-rich periplasmic protein (OmcB).

Its subcellular location is the cell outer membrane. In elementary bodies (EBs, the infectious stage, which is able to survive outside the host cell) provides the structural integrity of the outer envelope through disulfide cross-links with the small cysteine-rich protein and the large cysteine-rich periplasmic protein. It has been described in publications as the Sarkosyl-insoluble COMC (Chlamydia outer membrane complex), and serves as the functional equivalent of peptidoglycan. Functionally, permits diffusion of specific solutes through the outer membrane. This Chlamydia psittaci (Chlamydophila psittaci) protein is Major outer membrane porin (ompA).